A 310-amino-acid polypeptide reads, in one-letter code: Ribosomal RNA small subunit methyltransferase H (310 aa).

S-adenosyl-L-methionine-binding positions include 32–34 (AGH), aspartate 52, phenylalanine 79, aspartate 100, and glutamine 107.

This sequence belongs to the methyltransferase superfamily. RsmH family.

Its subcellular location is the cytoplasm. The enzyme catalyses cytidine(1402) in 16S rRNA + S-adenosyl-L-methionine = N(4)-methylcytidine(1402) in 16S rRNA + S-adenosyl-L-homocysteine + H(+). Specifically methylates the N4 position of cytidine in position 1402 (C1402) of 16S rRNA. The protein is Ribosomal RNA small subunit methyltransferase H of Halalkalibacterium halodurans (strain ATCC BAA-125 / DSM 18197 / FERM 7344 / JCM 9153 / C-125) (Bacillus halodurans).